The following is a 337-amino-acid chain: Cysteine proteinase 3 (337 aa).

Residues 1 to 21 (MRLSITLIFTLIVLSISFISA) form the signal peptide. A propeptide spans 22–120 (GNVFSHKQYQ…GLRLNRPQFK (99 aa)) (activation peptide). 3 disulfide bridges follow: Cys-142–Cys-185, Cys-176–Cys-219, and Cys-277–Cys-326. The active site involves Cys-145. Active-site residues include His-284 and Asn-304.

It belongs to the peptidase C1 family.

It is found in the lysosome. The polypeptide is Cysteine proteinase 3 (cprC) (Dictyostelium discoideum (Social amoeba)).